A 180-amino-acid polypeptide reads, in one-letter code: Adipocyte-related X-chromosome expressed sequence 1 (180 aa).

Residues 1–11 (MNSLLSRANSL) are Cytoplasmic-facing. A helical; Signal-anchor for type II membrane protein membrane pass occupies residues 12–32 (FAFTLSVMAALTLGCILTTAF). The Lumenal segment spans residues 33-180 (KDRSAPVRLH…PDSYEIATTF (148 aa)). Residue Asn141 is glycosylated (N-linked (GlcNAc...) asparagine).

The protein belongs to the SPCS3 family. In terms of tissue distribution, strongly expressed in epididymal white and brown adipose tissue with low levels in heart.

The protein localises to the endoplasmic reticulum membrane. In terms of biological role, plays a role in adipogenesis. This chain is Adipocyte-related X-chromosome expressed sequence 1, found in Mus musculus (Mouse).